Consider the following 179-residue polypeptide: NAD(P)H-quinone oxidoreductase subunit J (179 aa).

This sequence belongs to the complex I 30 kDa subunit family. NDH-1 can be composed of about 15 different subunits; different subcomplexes with different compositions have been identified which probably have different functions. In terms of processing, in at one experiment the initiator methionine has been seen to be kept and removed.

Its subcellular location is the cellular thylakoid membrane. The catalysed reaction is a plastoquinone + NADH + (n+1) H(+)(in) = a plastoquinol + NAD(+) + n H(+)(out). The enzyme catalyses a plastoquinone + NADPH + (n+1) H(+)(in) = a plastoquinol + NADP(+) + n H(+)(out). NDH-1 shuttles electrons from an unknown electron donor, via FMN and iron-sulfur (Fe-S) centers, to quinones in the respiratory and/or the photosynthetic chain. The immediate electron acceptor for the enzyme in this species is believed to be plastoquinone. Couples the redox reaction to proton translocation, and thus conserves the redox energy in a proton gradient. Cyanobacterial NDH-1 also plays a role in inorganic carbon-concentration. The polypeptide is NAD(P)H-quinone oxidoreductase subunit J (Synechocystis sp. (strain ATCC 27184 / PCC 6803 / Kazusa)).